Reading from the N-terminus, the 255-residue chain is Geranylgeranylglyceryl phosphate synthase (255 aa).

Residues Asp-26 and Ser-55 each contribute to the Mg(2+) site. Sn-glycerol 1-phosphate-binding positions include 174-180 (YLEAGSG), 205-206 (GG), and 227-228 (GT).

Belongs to the GGGP/HepGP synthase family. Group II subfamily. Mg(2+) is required as a cofactor.

The protein localises to the cytoplasm. The enzyme catalyses sn-glycerol 1-phosphate + (2E,6E,10E)-geranylgeranyl diphosphate = sn-3-O-(geranylgeranyl)glycerol 1-phosphate + diphosphate. It participates in membrane lipid metabolism; glycerophospholipid metabolism. Its function is as follows. Prenyltransferase that catalyzes the transfer of the geranylgeranyl moiety of geranylgeranyl diphosphate (GGPP) to the C3 hydroxyl of sn-glycerol-1-phosphate (G1P). This reaction is the first ether-bond-formation step in the biosynthesis of archaeal membrane lipids. The protein is Geranylgeranylglyceryl phosphate synthase of Thermococcus sibiricus (strain DSM 12597 / MM 739).